The chain runs to 393 residues: Branched-chain-amino-acid aminotransferase, mitochondrial (393 aa).

Residues 1–16 (MLQRHSLKLGKFSIRT) constitute a mitochondrion transit peptide. Lys-219 is subject to N6-(pyridoxal phosphate)lysine. Thr-315 is modified (phosphothreonine).

It belongs to the class-IV pyridoxal-phosphate-dependent aminotransferase family. Pyridoxal 5'-phosphate is required as a cofactor.

Its subcellular location is the mitochondrion matrix. The catalysed reaction is L-leucine + 2-oxoglutarate = 4-methyl-2-oxopentanoate + L-glutamate. It carries out the reaction L-isoleucine + 2-oxoglutarate = (S)-3-methyl-2-oxopentanoate + L-glutamate. The enzyme catalyses L-valine + 2-oxoglutarate = 3-methyl-2-oxobutanoate + L-glutamate. It catalyses the reaction a 2-oxocarboxylate + L-methionine = 4-methylsulfanyl-2-oxobutanoate + an L-alpha-amino acid. The protein operates within amino-acid biosynthesis; L-isoleucine biosynthesis; L-isoleucine from 2-oxobutanoate: step 4/4. It participates in amino-acid biosynthesis; L-leucine biosynthesis; L-leucine from 3-methyl-2-oxobutanoate: step 4/4. Its pathway is amino-acid biosynthesis; L-valine biosynthesis; L-valine from pyruvate: step 4/4. It functions in the pathway amino-acid biosynthesis; L-methionine biosynthesis via salvage pathway; L-methionine from S-methyl-5-thio-alpha-D-ribose 1-phosphate: step 6/6. Functionally, mitochondrial isozyme of branched-chain-amino-acid aminotransferase, involved in the biosynthesis of the branched chain amino acids (BCAAs) leucine, isoleucine, and valine. Catalyzes the formation of methionine from 2-keto-4-methylthiobutyrate (KMTB) in the methionine salvage pathway primarily using BCAAs (leucine, isoleucine, and valine) as the amino donors. Appears to be involved in the regulation of the cell cycle, although this may be indirect via metabolic changes. Connects BCAAs and TCA-cycle metabolism governing TCA-cycle flux to activate TORC1 signaling. High copy suppressor of a temperature-sensitive mutation in the ABC transporter, ATM1. The chain is Branched-chain-amino-acid aminotransferase, mitochondrial from Saccharomyces cerevisiae (strain ATCC 204508 / S288c) (Baker's yeast).